Reading from the N-terminus, the 443-residue chain is 5-methylthioadenosine/S-adenosylhomocysteine deaminase 1 (443 aa).

2 residues coordinate Zn(2+): H69 and H71. Positions 98 and 191 each coordinate substrate. A Zn(2+)-binding site is contributed by H218. Residues E221 and D306 each coordinate substrate. Position 306 (D306) interacts with Zn(2+).

It belongs to the metallo-dependent hydrolases superfamily. MTA/SAH deaminase family. Zn(2+) serves as cofactor.

The enzyme catalyses S-adenosyl-L-homocysteine + H2O + H(+) = S-inosyl-L-homocysteine + NH4(+). It catalyses the reaction S-methyl-5'-thioadenosine + H2O + H(+) = S-methyl-5'-thioinosine + NH4(+). In terms of biological role, catalyzes the deamination of 5-methylthioadenosine and S-adenosyl-L-homocysteine into 5-methylthioinosine and S-inosyl-L-homocysteine, respectively. Is also able to deaminate adenosine. The protein is 5-methylthioadenosine/S-adenosylhomocysteine deaminase 1 of Syntrophus aciditrophicus (strain SB).